A 349-amino-acid chain; its full sequence is Crinkler effector protein 5 (349 aa).

The first 17 residues, 1 to 17 (MVKLFCSIVGVAGSPFS), serve as a signal peptide directing secretion. The segment at 18–57 (VEVNEGKTVDDLKKAIKAENLDDPTLRNVAPKNLQLFLAK) is LQLFLAK domain. The DWL domain stretch occupies residues 58–108 (KGDAWLRYNEDLDTYLQSEIDTSSYLHMRASWKLSKPTLFGPDVSLGEDVV). Positions 109-115 (HVLVVVP) match the HVLVXXP motif motif.

This sequence belongs to the Crinkler effector family.

It localises to the secreted. Its subcellular location is the host nucleus. Functionally, secreted effector that elicits necrosis in host plants, a characteristic of plant innate immunity. This Phytophthora infestans (Potato late blight agent) protein is Crinkler effector protein 5.